Reading from the N-terminus, the 268-residue chain is Phosphatidylglycerol--prolipoprotein diacylglyceryl transferase (268 aa).

A run of 4 helical transmembrane segments spans residues 14 to 34 (LGPIKIHWYGLMYLLGIFAGW), 57 to 77 (LTFYVALGVILGGRIGYIIFY), 90 to 110 (FFLWDGGMSFHGGFIGVLIAF), and 117 to 137 (IGANFFDLGEFIAPVIPIGLG). An a 1,2-diacyl-sn-glycero-3-phospho-(1'-sn-glycerol)-binding site is contributed by Arg-140. The next 3 helical transmembrane spans lie at 174–194 (QLFEFFFEGVVLFSVLWLVTI), 200–220 (YLVLGLFMFLYGCARFICEFF), and 238–258 (GQILSIPMILLGAVILIAVFI).

The protein belongs to the Lgt family.

Its subcellular location is the cell inner membrane. The enzyme catalyses L-cysteinyl-[prolipoprotein] + a 1,2-diacyl-sn-glycero-3-phospho-(1'-sn-glycerol) = an S-1,2-diacyl-sn-glyceryl-L-cysteinyl-[prolipoprotein] + sn-glycerol 1-phosphate + H(+). It participates in protein modification; lipoprotein biosynthesis (diacylglyceryl transfer). In terms of biological role, catalyzes the transfer of the diacylglyceryl group from phosphatidylglycerol to the sulfhydryl group of the N-terminal cysteine of a prolipoprotein, the first step in the formation of mature lipoproteins. The polypeptide is Phosphatidylglycerol--prolipoprotein diacylglyceryl transferase (Francisella tularensis subsp. mediasiatica (strain FSC147)).